The following is a 662-amino-acid chain: Forkhead box protein O1 (662 aa).

Disordered regions lie at residues 1-62 (MAEA…PSAS) and 122-165 (GCLH…SRRN). Phosphothreonine; by PKB/AKT1 or PKB/AKT2 and SGK1 is present on Thr-24. The span at 33–62 (SQSNSATSSPAPSGGAAANPDAAAGLPSAS) shows a compositional bias: low complexity. Positions 126–146 (PAPPQQPPPPGPLSQHPPVPP) are enriched in pro residues. Residues 167–261 (WGNLSYADLI…KSGKSPRRRA (95 aa)) constitute a DNA-binding region (fork-head). DNA-binding regions lie at residues 218–225 (NSIRHNLS) and 241–244 (SSWW). Ser-219 bears the Phosphoserine; by STK4/MST1 mark. Ser-225, Ser-241, and Ser-242 each carry phosphoserine. The segment at 241 to 342 (SSWWMLNPEG…GRLSPIMTEQ (102 aa)) is disordered. 2 positions are modified to N6-acetyllysine: Lys-252 and Lys-255. Phosphoserine; by CDK1 is present on Ser-256. 2 positions are modified to omega-N-methylarginine; by PRMT1: Arg-258 and Arg-260. Residues 258–260 (RRR) carry the Nuclear localization signal motif. A Phosphoserine; by PKB/AKT1 and SGK1 modification is found at Ser-263. N6-acetyllysine is present on residues Lys-269, Lys-272, and Lys-281. Positions 271 to 282 (AKSRGRAAKKKA) are enriched in basic residues. The tract at residues 290–570 (GAGDSPGSQF…RLTQEKTALQ (281 aa)) is sufficient for interaction with NLK. Phosphoserine occurs at positions 294 and 305. A compositionally biased stretch (polar residues) spans 316–333 (NWSTFRPRTSSNASTISG). Ser-326 carries the phosphoserine; by PKB/AKT1 modification. Ser-329 is subject to Phosphoserine; by CK1 and SGK1. Phosphoserine; by CK1 is present on Ser-332. At Ser-336 the chain carries Phosphoserine; by DYRK1A. Thr-340 is modified (phosphothreonine). The tract at residues 370–466 (SEISNPENME…GGMAQYNCAA (97 aa)) is required for interaction with RUNX2. N6-acetyllysine is present on Lys-430. A Required for interaction with SIRT1 motif is present at residues 469–473 (LKELL).

As to quaternary structure, interacts with LRPPRC. Interacts with RUNX2; the interaction inhibits RUNX2 transcriptional activity and mediates the IGF1/insulin-dependent BGLAP expression in osteoblasts Interacts with PPP2R1A; the interaction regulates the dephosphorylation of FOXO1 at Thr-24 and Ser-263 leading to its nuclear import. Interacts with NLK. Interacts with SIRT1; the interaction results in the deacetylation of FOXO1 leading to activation of FOXO1-mediated transcription of genes involved in DNA repair and stress resistance. Binds to CDK1. Interacts with the 14-3-3 proteins, YWHAG and YWHAZ; the interactions require insulin-stimulated phosphorylation on Thr-24, promote nuclear exit and loss of transcriptional activity. Interacts with SKP2; the interaction ubiquitinates FOXO1 leading to its proteasomal degradation. The interaction requires the presence of KRIT1. Interacts (via the C-terminal half) with ATF4 (via its DNA binding domain); the interaction occurs in osteoblasts, regulates glucose homeostasis via suppression of beta-cell proliferation and subsequent decrease in insulin production. Interacts with PRMT1; the interaction methylates FOXO1, prevents PKB/AKT1 phosphorylation and retains FOXO1 in the nucleus. Interacts with EP300 and CREBBP; the interactions acetylate FOXO1. Interacts with SIRT2; the interaction is disrupted in response to oxidative stress or serum deprivation, leading to increased level of acetylated FOXO1, which promotes stress-induced autophagy by stimulating E1-like activating enzyme ATG7. Interacts (acetylated form) with ATG7; the interaction is increased in response to oxidative stress or serum deprivation and promotes the autophagic process leading to cell death. Interacts (acetylated form) with PPARG. Interacts with XBP1; this interaction is direct and leads to FOXO1 ubiquitination and degradation via the proteasome pathway. Interacts (via the Fork-head domain) with CEBPA; the interaction increases when FOXO1 is deacetylated. Interacts with WDFY2. Forms a complex with WDFY2 and AKT1. Interacts with CRY1. Interacts with PPIA/CYPA; the interaction promotes FOXO1 dephosphorylation, nuclear accumulation and transcriptional activity. Interacts with TOX4; FOXO1 is required for full induction of TOX4-dependent activity and the interaction is inhibited by insulin. Interacts (when phosphorylated on Ser-263) with STUB1/CHIP. In terms of processing, phosphorylation by NLK promotes nuclear export and inhibits the transcriptional activity. In response to growth factors, phosphorylation on Thr-24, Ser-263 and Ser-326 by PKB/AKT1 promotes nuclear export and inactivation of transactivational activity. Phosphorylation on Thr-24 is required for binding 14-3-3 proteins. Phosphorylation of Ser-263 decreases DNA-binding activity and promotes the phosphorylation of Thr-24 and Ser-326, permitting phosphorylation of Ser-329 and Ser-332, probably by CDK1, leading to nuclear exclusion and loss of function. Stress signals, such as response to oxygen or nitric oxide, attenuate the PKB/AKT1-mediated phosphorylation leading to nuclear retention. Phosphorylation of Ser-336 is independent of IGF1 and leads to reduced function. Dephosphorylated on Thr-24 and Ser-263 by PP2A in beta-cells under oxidative stress leading to nuclear retention. Phosphorylation of Ser-256 by CDK1 disrupts binding of 14-3-3 proteins leading to nuclear accumulation and has no effect on DNA binding nor transcriptional activity. Phosphorylation by STK4/MST1 on Ser-219, upon oxidative stress, inhibits binding to 14-3-3 proteins and nuclear export. PPIA/CYPA promotes its dephosphorylation on Ser-263. Ubiquitinated by SKP2. Ubiquitination leads to proteasomal degradation. Ubiquitinated by STUB1/CHIP; when Ser-263 is phosphorylated. Post-translationally, methylation inhibits AKT1-mediated phosphorylation at Ser-263 and is increased by oxidative stress. In terms of processing, acetylated. Acetylation at Lys-269 and Lys-281 are necessary for autophagic cell death induction. Deacetylated by SIRT2 in response to oxidative stress or serum deprivation, thereby negatively regulating FOXO1-mediated autophagic cell death. Once in the nucleus, acetylated by CREBBP/EP300. Acetylation diminishes the interaction with target DNA and attenuates the transcriptional activity. It increases the phosphorylation at Ser-263. Deacetylation by SIRT1 results in reactivation of the transcriptional activity. Oxidative stress by hydrogen peroxide treatment appears to promote deacetylation and uncoupling of insulin-induced phosphorylation. By contrast, resveratrol acts independently of acetylation. Acetylated at Lys-430, promoting its localization to the nucleus and transcription factor activity. Deacetylation at Lys-430 by SIRT6, promotes its translocation into the cytoplasm, preventing its transcription factor activity. Deacetylation and subsequent inhibition by SIRT6 has different effects depending on cell types: it inhibits gluconeogenesis in hepatocytes, promotes glucose sensing in pancreatic beta-cells and regulates lipid catabolism in brown adipocytes. Highly in subcutaneous adipose and visceral adipose tissues. Levels higher in piglets than in adults. Also expressed at lower levels in liver and muscle.

Its subcellular location is the cytoplasm. The protein resides in the nucleus. Functionally, transcription factor that is the main target of insulin signaling and regulates metabolic homeostasis in response to oxidative stress. Binds to the insulin response element (IRE) with consensus sequence 5'-TT[G/A]TTTTG-3' and the related Daf-16 family binding element (DBE) with consensus sequence 5'-TT[G/A]TTTAC-3'. Activity suppressed by insulin. Main regulator of redox balance and osteoblast numbers and controls bone mass. Orchestrates the endocrine function of the skeleton in regulating glucose metabolism. Also acts as a key regulator of chondrogenic commitment of skeletal progenitor cells in response to lipid availability: when lipids levels are low, translocates to the nucleus and promotes expression of SOX9, which induces chondrogenic commitment and suppresses fatty acid oxidation. Acts synergistically with ATF4 to suppress osteocalcin/BGLAP activity, increasing glucose levels and triggering glucose intolerance and insulin insensitivity. Also suppresses the transcriptional activity of RUNX2, an upstream activator of osteocalcin/BGLAP. Acts as an inhibitor of glucose sensing in pancreatic beta cells by acting as a transcription repressor and suppressing expression of PDX1. In hepatocytes, promotes gluconeogenesis by acting together with PPARGC1A and CEBPA to activate the expression of genes such as IGFBP1, G6PC1 and PCK1. Also promotes gluconeogenesis by directly promoting expression of PPARGC1A and G6PC1. Important regulator of cell death acting downstream of CDK1, PKB/AKT1 and STK4/MST1. Promotes neural cell death. Mediates insulin action on adipose tissue. Regulates the expression of adipogenic genes such as PPARG during preadipocyte differentiation and, adipocyte size and adipose tissue-specific gene expression in response to excessive calorie intake. Regulates the transcriptional activity of GADD45A and repair of nitric oxide-damaged DNA in beta-cells. Required for the autophagic cell death induction in response to starvation or oxidative stress in a transcription-independent manner. Mediates the function of MLIP in cardiomyocytes hypertrophy and cardiac remodeling. Positive regulator of apoptosis in cardiac smooth muscle cells as a result of its transcriptional activation of pro-apoptotic genes. Regulates endothelial cell (EC) viability and apoptosis in a PPIA/CYPA-dependent manner via transcription of CCL2 and BCL2L11 which are involved in EC chemotaxis and apoptosis. The sequence is that of Forkhead box protein O1 (FOXO1) from Sus scrofa (Pig).